Here is a 203-residue protein sequence, read N- to C-terminus: Probable nicotinate-nucleotide adenylyltransferase (203 aa).

It belongs to the NadD family.

The catalysed reaction is nicotinate beta-D-ribonucleotide + ATP + H(+) = deamido-NAD(+) + diphosphate. It participates in cofactor biosynthesis; NAD(+) biosynthesis; deamido-NAD(+) from nicotinate D-ribonucleotide: step 1/1. Functionally, catalyzes the reversible adenylation of nicotinate mononucleotide (NaMN) to nicotinic acid adenine dinucleotide (NaAD). In Dictyoglomus turgidum (strain DSM 6724 / Z-1310), this protein is Probable nicotinate-nucleotide adenylyltransferase.